Consider the following 256-residue polypeptide: tRNA (guanine-N(1)-)-methyltransferase (256 aa).

S-adenosyl-L-methionine is bound by residues G119 and 139 to 144 (IGDYVV).

This sequence belongs to the RNA methyltransferase TrmD family. In terms of assembly, homodimer.

It localises to the cytoplasm. The catalysed reaction is guanosine(37) in tRNA + S-adenosyl-L-methionine = N(1)-methylguanosine(37) in tRNA + S-adenosyl-L-homocysteine + H(+). Its function is as follows. Specifically methylates guanosine-37 in various tRNAs. In Nitrosospira multiformis (strain ATCC 25196 / NCIMB 11849 / C 71), this protein is tRNA (guanine-N(1)-)-methyltransferase.